The chain runs to 271 residues: Phosphonates import ATP-binding protein PhnC 2 (271 aa).

The 245-residue stretch at 2–246 (LTVDNLEKTY…ARDEIYRGGE (245 aa)) folds into the ABC transporter domain. Position 35–42 (35–42 (GPSGAGKS)) interacts with ATP. Positions 243-254 (RGGESIADREEP) are enriched in basic and acidic residues. Residues 243–271 (RGGESIADREEPSAGNSTDADDVIAERGD) form a disordered region.

It belongs to the ABC transporter superfamily. Phosphonates importer (TC 3.A.1.9.1) family. As to quaternary structure, the complex is composed of two ATP-binding proteins (PhnC), two transmembrane proteins (PhnE) and a solute-binding protein (PhnD).

It localises to the cell membrane. It catalyses the reaction phosphonate(out) + ATP + H2O = phosphonate(in) + ADP + phosphate + H(+). Functionally, part of the ABC transporter complex PhnCDE involved in phosphonates import. Responsible for energy coupling to the transport system. This Haloarcula marismortui (strain ATCC 43049 / DSM 3752 / JCM 8966 / VKM B-1809) (Halobacterium marismortui) protein is Phosphonates import ATP-binding protein PhnC 2.